Here is a 932-residue protein sequence, read N- to C-terminus: 2-oxoglutarate dehydrogenase E1 component (932 aa).

The protein belongs to the alpha-ketoglutarate dehydrogenase family. Homodimer. Part of the 2-oxoglutarate dehydrogenase (OGDH) complex composed of E1 (2-oxoglutarate dehydrogenase), E2 (dihydrolipoamide succinyltransferase) and E3 (dihydrolipoamide dehydrogenase); the complex contains multiple copies of the three enzymatic components (E1, E2 and E3). Thiamine diphosphate serves as cofactor.

It carries out the reaction N(6)-[(R)-lipoyl]-L-lysyl-[protein] + 2-oxoglutarate + H(+) = N(6)-[(R)-S(8)-succinyldihydrolipoyl]-L-lysyl-[protein] + CO2. Functionally, E1 component of the 2-oxoglutarate dehydrogenase (OGDH) complex which catalyzes the decarboxylation of 2-oxoglutarate, the first step in the conversion of 2-oxoglutarate to succinyl-CoA and CO(2). The chain is 2-oxoglutarate dehydrogenase E1 component from Staphylococcus aureus (strain MW2).